Reading from the N-terminus, the 606-residue chain is Zinc finger protein 652 (606 aa).

At Ser57 the chain carries Phosphoserine. Residues 71–97 are compositionally biased toward basic and acidic residues; the sequence is HLHETEEQPYFRETRAVSDVHAVKEDR. 2 disordered regions span residues 71–113 and 130–235; these read HLHE…VSYK and VSKG…APVQ. Residues 98 to 109 show a composition bias toward acidic residues; that stretch reads ENSDDTEEEEEE. The residue at position 100 (Ser100) is a Phosphoserine. Thr103 is subject to Phosphothreonine. Residues 137–149 are compositionally biased toward polar residues; it reads VSSQSKETPVLKT. Acidic residues predominate over residues 152-170; sequence EEEEEESEEEATDDSNDYG. Basic and acidic residues predominate over residues 171-183; that stretch reads ENEKQKKKEKIVE. Low complexity predominate over residues 184-209; it reads KVSVTQRRTRRAASVAAATTSPTPRT. Phosphoserine is present on residues Ser197 and Ser204. The C2H2-type 1 zinc-finger motif lies at 245 to 268; sequence LTCEKCPRVFNTRWYLEKHMNVTH. The segment at 272 to 294 adopts a C2H2-type 2; degenerate zinc-finger fold; that stretch reads QICDKCGKKFVLESELSLHQQTD. 6 consecutive C2H2-type zinc fingers follow at residues 299-322, 329-351, 357-379, 385-407, 413-435, and 441-463; these read IQCV…KIVH, FSCE…MVAH, FTCE…SLQH, FRCE…MSIH, FMCQ…MKTH, and FICE…RRTH. The C2H2-type 9; degenerate zinc-finger motif lies at 469-492; it reads YPCDVCGQRFRFSNMLKAHKEKCF. The interval 498-606 is mediates interaction with CBFA2T3; that stretch reads VNVPPAVQIP…AEKNSSAQHH (109 aa).

Belongs to the krueppel C2H2-type zinc-finger protein family. As to quaternary structure, interacts with CBFA2T3. As to expression, widely expressed with higher expression in breast, prostate, vulva and pancreas.

The protein localises to the nucleus. Functionally, functions as a transcriptional repressor. The sequence is that of Zinc finger protein 652 (ZNF652) from Homo sapiens (Human).